A 319-amino-acid polypeptide reads, in one-letter code: Transcription initiation factor IIB 6 (319 aa).

The span at 1–16 (MTDARMRSREQERTDE) shows a compositional bias: basic and acidic residues. Positions 1 to 33 (MTDARMRSREQERTDETESESTDGCPECGGLVV) are disordered. Residues 21-51 (STDGCPECGGLVVNDEEHGESVCADCGLVVE) form a TFIIB-type zinc finger. 4 residues coordinate Zn(2+): Cys-25, Cys-28, Cys-43, and Cys-46. Basic and acidic residues predominate over residues 59-74 (PEWRAFDSKEKDEKSR). The disordered stretch occupies residues 59–89 (PEWRAFDSKEKDEKSRVGAPTTNTMHDKGLS). A run of 2 repeats spans residues 137 to 220 (GEID…VREL) and 231 to 312 (SYVP…ELLE).

This sequence belongs to the TFIIB family.

Stabilizes TBP binding to an archaeal box-A promoter. Also responsible for recruiting RNA polymerase II to the pre-initiation complex (DNA-TBP-TFIIB). The chain is Transcription initiation factor IIB 6 from Halobacterium salinarum (strain ATCC 700922 / JCM 11081 / NRC-1) (Halobacterium halobium).